The sequence spans 608 residues: Coilin (608 aa).

The disordered stretch occupies residues 134 to 272; that stretch reads KETGGYESES…RKKAKRQWLR (139 aa). Positions 141 to 155 are enriched in acidic residues; sequence SESEEDELEEEAEEF. Basic residues predominate over residues 161–179; that stretch reads ASKKRKTSSKNQSTKRKKC. Residues 163–170 carry the Nuclear localization signal 1 motif; sequence KKRKTSSK. At Ser187 the chain carries Phosphoserine. Residues 211-228 are compositionally biased toward polar residues; the sequence is DVQSANNDEQNNDSTKPM. The segment covering 235–245 has biased composition (basic and acidic residues); sequence SQQEESKEHND. The Nuclear localization signal 2 motif lies at 253-260; that stretch reads TKKTPSRS. A compositionally biased stretch (basic residues) spans 256–269; it reads TPSRSARRKKAKRQ. The 101-residue stretch at 410–510 folds into the Tudor; atypical domain; sequence YEQLVAYTGS…LLDVRSVKTS (101 aa). The tract at residues 513–585 is disordered; it reads DSAEVAKSAL…KKGSSSGGSW (73 aa). Over residues 558 to 585 the composition is skewed to low complexity; that stretch reads EALSAKKAALSQANNGWNKKGSSSGGSW.

This sequence belongs to the coilin family. In terms of assembly, homooligomer. Interaction with RNA results in multimerization due to structural alteration in the NOD domain.

The protein localises to the nucleus. It localises to the cajal body. Probable component of nuclear coiled bodies, also known as Cajal bodies or CBs, which are involved in the modification and assembly of nucleoplasmic snRNPs. Required for CBs formation. Binds snRNAs and non-specific artificial RNA via the N-terminal part of the NOD domain and via the NLS2 region (212-282) of the IDD domain. The two sites are able to function independently and provide effective RNA-binding in a non-cooperative manner. The polypeptide is Coilin (Arabidopsis thaliana (Mouse-ear cress)).